A 143-amino-acid polypeptide reads, in one-letter code: Ribonuclease H (143 aa).

The region spanning 1-140 is the RNase H type-1 domain; the sequence is MKVEIYTDGA…VDALANLGIE (140 aa). Residues aspartate 8, glutamate 46, aspartate 68, and aspartate 132 each coordinate Mg(2+).

This sequence belongs to the RNase H family. Monomer. Mg(2+) serves as cofactor.

The protein resides in the cytoplasm. The catalysed reaction is Endonucleolytic cleavage to 5'-phosphomonoester.. Endonuclease that specifically degrades the RNA of RNA-DNA hybrids. The protein is Ribonuclease H of Legionella pneumophila (strain Paris).